The chain runs to 453 residues: MKKKVGIISLGCPKNLVDSEIMLGLLKKNDFEITSDSEEANVIIVNTCGFIESAKEESINTILEMANYKNKNCEMLIVAGCLAQRYKDEIIKEMPEVDAVVGVSGYDEIAKVIEEFYSKKNDKNDKEKAVFHKDTLSVEYLNNERLLSTNSGYAYLKISEGCDNRCTYCAIPYIRGPYRSRKMEDIISEAEFLAGKGVKEVILVAQDVTVYGKDLYGQKKLVELVREVSGIEGIEWIRLLYTYPEEIDEELIKEIANNEKVVKYLDIPIQHASDKILKLMGRRSTSEGIRNILDRLRAEVPDIVLRTSLIVGFPGEDEKDFKILYDFVRKYEFDRLGVFTYSREEGTPAYDLKPQIKKSVKESRRNDIMQLQKEIVQRKNESRLEKVYKTLVEGVSEDGIFYYGRTYAEAPDIDGSVYFTSAEPLKFGEFVNVKVLNIDDYDLIGEVINESSK.

The region spanning Lys-3 to Ser-118 is the MTTase N-terminal domain. [4Fe-4S] cluster contacts are provided by Cys-12, Cys-48, Cys-81, Cys-162, Cys-166, and Cys-169. The region spanning Ser-148–Arg-378 is the Radical SAM core domain. Positions Glu-381–Asn-449 constitute a TRAM domain.

The protein belongs to the methylthiotransferase family. RimO subfamily. [4Fe-4S] cluster is required as a cofactor.

Its subcellular location is the cytoplasm. The enzyme catalyses L-aspartate(89)-[ribosomal protein uS12]-hydrogen + (sulfur carrier)-SH + AH2 + 2 S-adenosyl-L-methionine = 3-methylsulfanyl-L-aspartate(89)-[ribosomal protein uS12]-hydrogen + (sulfur carrier)-H + 5'-deoxyadenosine + L-methionine + A + S-adenosyl-L-homocysteine + 2 H(+). In terms of biological role, catalyzes the methylthiolation of an aspartic acid residue of ribosomal protein uS12. This chain is Ribosomal protein uS12 methylthiotransferase RimO, found in Acetivibrio thermocellus (strain ATCC 27405 / DSM 1237 / JCM 9322 / NBRC 103400 / NCIMB 10682 / NRRL B-4536 / VPI 7372) (Clostridium thermocellum).